A 364-amino-acid chain; its full sequence is Protein RecA (364 aa).

77-84 is an ATP binding site; the sequence is GPESSGKT. A disordered region spans residues 343–364; sequence DRFLQNGGPDPDDGDGDATAEM. Over residues 352–364 the composition is skewed to acidic residues; it reads DPDDGDGDATAEM.

Belongs to the RecA family.

The protein localises to the cytoplasm. In terms of biological role, can catalyze the hydrolysis of ATP in the presence of single-stranded DNA, the ATP-dependent uptake of single-stranded DNA by duplex DNA, and the ATP-dependent hybridization of homologous single-stranded DNAs. It interacts with LexA causing its activation and leading to its autocatalytic cleavage. The polypeptide is Protein RecA (Rhizobium johnstonii (strain DSM 114642 / LMG 32736 / 3841) (Rhizobium leguminosarum bv. viciae)).